Consider the following 294-residue polypeptide: MLENLSTEHRNEKTMNLDEMSIKEILQSMNEEDRTVALAVENEIEQIEKVVQTVIKSFEEEGRLIYIGAGTSGRLGILDAVECPPTFGTDDKMVQGFIAGGLKAFTKAVEGAEDREELADEDLKSIGLNEKDTVIGIAASGRTPYVIGGLKYANRVGASTASISCNKNAEISKYAKINVEVGTGAEILTGSTRLKAGTAQKLVLNMISTASMIGVGKVYKNLMVDVQSTNEKLVERSKRIIVEATGVSYEVAAEYYEKAERNVKAAIVMVLLQCEYGEALQKLKEAKGFVKKAL.

The SIS domain occupies V54 to K217. E82 serves as the catalytic Proton donor. E113 is a catalytic residue.

This sequence belongs to the GCKR-like family. MurNAc-6-P etherase subfamily. In terms of assembly, homodimer.

It catalyses the reaction N-acetyl-D-muramate 6-phosphate + H2O = N-acetyl-D-glucosamine 6-phosphate + (R)-lactate. Its pathway is amino-sugar metabolism; N-acetylmuramate degradation. In terms of biological role, specifically catalyzes the cleavage of the D-lactyl ether substituent of MurNAc 6-phosphate, producing GlcNAc 6-phosphate and D-lactate. This is N-acetylmuramic acid 6-phosphate etherase from Bacillus cereus (strain ATCC 10987 / NRS 248).